We begin with the raw amino-acid sequence, 177 residues long: Large ribosomal subunit protein uL6 (177 aa).

This sequence belongs to the universal ribosomal protein uL6 family. As to quaternary structure, part of the 50S ribosomal subunit.

This protein binds to the 23S rRNA, and is important in its secondary structure. It is located near the subunit interface in the base of the L7/L12 stalk, and near the tRNA binding site of the peptidyltransferase center. The protein is Large ribosomal subunit protein uL6 of Rhizobium leguminosarum bv. trifolii (strain WSM2304).